The sequence spans 209 residues: D-aminoacyl-tRNA deacylase 1 (209 aa).

3 residues coordinate Mg(2+): valine 4, glutamine 6, and cysteine 28. Positions 139–140 match the Gly-cisPro motif, important for rejection of L-amino acids motif; sequence GP. Residues 142–209 are disordered; the sequence is TIELESPAPG…EGDVSSEREP (68 aa). 2 stretches are compositionally biased toward basic and acidic residues: residues 159 to 170 and 181 to 194; these read QLSKLEKQQQRK and SSKE…EDRS. Residues serine 197, serine 204, and serine 205 each carry the phosphoserine modification.

This sequence belongs to the DTD family. In terms of assembly, homodimer. Interacts with CDC45 and TOPBP1. Preferentially phosphorylated in cells arrested early in S phase. Phosphorylation in the C-terminus weakens the interaction with CDC45. Expressed in many adult and fetal tissues. Highest levels in testis, ovary, spleen and in adult and fetal brain.

It is found in the nucleus. It localises to the cytoplasm. It carries out the reaction glycyl-tRNA(Ala) + H2O = tRNA(Ala) + glycine + H(+). It catalyses the reaction a D-aminoacyl-tRNA + H2O = a tRNA + a D-alpha-amino acid + H(+). Functionally, possible ATPase involved in DNA replication, may facilitate loading of CDC45 onto pre-replication complexes. An aminoacyl-tRNA editing enzyme that deacylates mischarged D-aminoacyl-tRNAs. Also deacylates mischarged glycyl-tRNA(Ala), protecting cells against glycine mischarging by AlaRS. Acts via tRNA-based rather than protein-based catalysis; rejects L-amino acids rather than detecting D-amino acids in the active site. By recycling D-aminoacyl-tRNA to D-amino acids and free tRNA molecules, this enzyme counteracts the toxicity associated with the formation of D-aminoacyl-tRNA entities in vivo and helps enforce protein L-homochirality. This is D-aminoacyl-tRNA deacylase 1 (DTD1) from Homo sapiens (Human).